A 206-amino-acid chain; its full sequence is GTP cyclohydrolase 1 (206 aa).

3 residues coordinate Zn(2+): cysteine 98, histidine 101, and cysteine 169.

It belongs to the GTP cyclohydrolase I family. Toroid-shaped homodecamer, composed of two pentamers of five dimers.

The enzyme catalyses GTP + H2O = 7,8-dihydroneopterin 3'-triphosphate + formate + H(+). The protein operates within cofactor biosynthesis; 7,8-dihydroneopterin triphosphate biosynthesis; 7,8-dihydroneopterin triphosphate from GTP: step 1/1. In Helicobacter hepaticus (strain ATCC 51449 / 3B1), this protein is GTP cyclohydrolase 1.